Reading from the N-terminus, the 215-residue chain is ATP-dependent Clp protease proteolytic subunit (215 aa).

The active-site Nucleophile is the Ser-116. His-141 is an active-site residue.

Belongs to the peptidase S14 family. As to quaternary structure, fourteen ClpP subunits assemble into 2 heptameric rings which stack back to back to give a disk-like structure with a central cavity, resembling the structure of eukaryotic proteasomes.

The protein localises to the cytoplasm. The catalysed reaction is Hydrolysis of proteins to small peptides in the presence of ATP and magnesium. alpha-casein is the usual test substrate. In the absence of ATP, only oligopeptides shorter than five residues are hydrolyzed (such as succinyl-Leu-Tyr-|-NHMec, and Leu-Tyr-Leu-|-Tyr-Trp, in which cleavage of the -Tyr-|-Leu- and -Tyr-|-Trp bonds also occurs).. Functionally, cleaves peptides in various proteins in a process that requires ATP hydrolysis. Has a chymotrypsin-like activity. Plays a major role in the degradation of misfolded proteins. The sequence is that of ATP-dependent Clp protease proteolytic subunit from Psychrobacter cryohalolentis (strain ATCC BAA-1226 / DSM 17306 / VKM B-2378 / K5).